We begin with the raw amino-acid sequence, 234 residues long: Protein spitz (234 aa).

A signal peptide spans 1-28 (MHSTMSVQHGLVALVLIGCLAHPWHVEA). The Lumenal segment spans residues 29 to 143 (CSSRTVPKPR…RPRPMLEKAS (115 aa)). Positions 33 to 71 (TVPKPRSSISSSMSGTALPPTQAPVTSSTTMRTTTTTTP) are disordered. Over residues 56 to 71 (PVTSSTTMRTTTTTTP) the composition is skewed to low complexity. A glycan (N-linked (GlcNAc...) asparagine) is linked at asparagine 74. An EGF-like domain is found at 78–122 (PTYKCPETFDAWYCLNDAHCFAVKIADLPVYSCECAIGFMGQRCE). 3 disulfides stabilise this stretch: cysteine 82–cysteine 97, cysteine 91–cysteine 110, and cysteine 112–cysteine 121. The chain crosses the membrane as a helical span at residues 144-164 (IASGAMCALVFMLFVCLAFYL). The Cytoplasmic segment spans residues 165 to 234 (RFEQRAAKKA…SFAIRRSNKL (70 aa)).

In terms of assembly, interacts with Star via the lumenal domain. In terms of processing, proteolytic processing by Rhomboid occurs in the Golgi. Cleavage takes place within the transmembrane domain close to residue 144 and the active growth factor is released. Post-translationally, N-glycosylated and O-glycosylated. Expressed throughout the embryo.

The protein resides in the cell membrane. It localises to the endoplasmic reticulum membrane. The protein localises to the golgi apparatus membrane. Functionally, ligand for the EGF receptor (Gurken). Involved in a number of unrelated developmental choices, for example, dorsal-ventral axis formation, glial migration, sensory organ determination, and muscle development. It is required for photoreceptor determination. This is Protein spitz (spi) from Drosophila melanogaster (Fruit fly).